A 334-amino-acid chain; its full sequence is Holliday junction branch migration complex subunit RuvB (334 aa).

The interval 4–184 (ADRLIQPQLQ…FGIPLRLEFY (181 aa)) is large ATPase domain (RuvB-L). ATP is bound by residues R24, G65, K68, T69, T70, 131-133 (EDY), R174, Y184, and R221. T69 contacts Mg(2+). A small ATPAse domain (RuvB-S) region spans residues 185 to 255 (NIKDLSTIVT…VADHALDLLD (71 aa)). The segment at 258-334 (NEGFDYMDRK…YQHFQLIKPE (77 aa)) is head domain (RuvB-H). 3 residues coordinate DNA: R294, R313, and R318.

The protein belongs to the RuvB family. As to quaternary structure, homohexamer. Forms an RuvA(8)-RuvB(12)-Holliday junction (HJ) complex. HJ DNA is sandwiched between 2 RuvA tetramers; dsDNA enters through RuvA and exits via RuvB. An RuvB hexamer assembles on each DNA strand where it exits the tetramer. Each RuvB hexamer is contacted by two RuvA subunits (via domain III) on 2 adjacent RuvB subunits; this complex drives branch migration. In the full resolvosome a probable DNA-RuvA(4)-RuvB(12)-RuvC(2) complex forms which resolves the HJ.

The protein localises to the cytoplasm. It catalyses the reaction ATP + H2O = ADP + phosphate + H(+). In terms of biological role, the RuvA-RuvB-RuvC complex processes Holliday junction (HJ) DNA during genetic recombination and DNA repair, while the RuvA-RuvB complex plays an important role in the rescue of blocked DNA replication forks via replication fork reversal (RFR). RuvA specifically binds to HJ cruciform DNA, conferring on it an open structure. The RuvB hexamer acts as an ATP-dependent pump, pulling dsDNA into and through the RuvAB complex. RuvB forms 2 homohexamers on either side of HJ DNA bound by 1 or 2 RuvA tetramers; 4 subunits per hexamer contact DNA at a time. Coordinated motions by a converter formed by DNA-disengaged RuvB subunits stimulates ATP hydrolysis and nucleotide exchange. Immobilization of the converter enables RuvB to convert the ATP-contained energy into a lever motion, pulling 2 nucleotides of DNA out of the RuvA tetramer per ATP hydrolyzed, thus driving DNA branch migration. The RuvB motors rotate together with the DNA substrate, which together with the progressing nucleotide cycle form the mechanistic basis for DNA recombination by continuous HJ branch migration. Branch migration allows RuvC to scan DNA until it finds its consensus sequence, where it cleaves and resolves cruciform DNA. The polypeptide is Holliday junction branch migration complex subunit RuvB (Shewanella sp. (strain W3-18-1)).